A 431-amino-acid chain; its full sequence is Enolase (431 aa).

A (2R)-2-phosphoglycerate-binding site is contributed by glutamine 167. Glutamate 209 (proton donor) is an active-site residue. Aspartate 246, glutamate 289, and aspartate 316 together coordinate Mg(2+). Residues lysine 341, arginine 370, serine 371, and lysine 392 each contribute to the (2R)-2-phosphoglycerate site. Catalysis depends on lysine 341, which acts as the Proton acceptor.

This sequence belongs to the enolase family. Component of the RNA degradosome, a multiprotein complex involved in RNA processing and mRNA degradation. Requires Mg(2+) as cofactor.

The protein resides in the cytoplasm. Its subcellular location is the secreted. It is found in the cell surface. The catalysed reaction is (2R)-2-phosphoglycerate = phosphoenolpyruvate + H2O. Its pathway is carbohydrate degradation; glycolysis; pyruvate from D-glyceraldehyde 3-phosphate: step 4/5. Functionally, catalyzes the reversible conversion of 2-phosphoglycerate (2-PG) into phosphoenolpyruvate (PEP). It is essential for the degradation of carbohydrates via glycolysis. This is Enolase from Shewanella woodyi (strain ATCC 51908 / MS32).